A 118-amino-acid chain; its full sequence is Large ribosomal subunit protein uL18 (118 aa).

The disordered stretch occupies residues 1 to 20 (MISKPDKNKKRQRRHARVRS). The segment covering 7 to 20 (KNKKRQRRHARVRS) has biased composition (basic residues).

It belongs to the universal ribosomal protein uL18 family. As to quaternary structure, part of the 50S ribosomal subunit; part of the 5S rRNA/L5/L18/L25 subcomplex. Contacts the 5S and 23S rRNAs.

This is one of the proteins that bind and probably mediate the attachment of the 5S RNA into the large ribosomal subunit, where it forms part of the central protuberance. The sequence is that of Large ribosomal subunit protein uL18 from Pediococcus pentosaceus (strain ATCC 25745 / CCUG 21536 / LMG 10740 / 183-1w).